Consider the following 181-residue polypeptide: Phospholipase A2 inhibitor gamma subunit B (181 aa).

Cystine bridges form between cysteine 3/cysteine 27, cysteine 6/cysteine 13, cysteine 20/cysteine 48, cysteine 54/cysteine 75, cysteine 76/cysteine 81, cysteine 101/cysteine 126, cysteine 119/cysteine 146, and cysteine 152/cysteine 172.

This sequence belongs to the CNF-like-inhibitor family. Heterotrimer of 2 subunits A and 1 subunit B. As to expression, expressed by the liver.

It localises to the secreted. Its function is as follows. Strongly inhibits its own venom PLA2 and all other PLA2s tested including Elapid, Crotalid and Viperid venom PLA2s, as well as honeybee PLA2s. This is Phospholipase A2 inhibitor gamma subunit B from Laticauda semifasciata (Black-banded sea krait).